We begin with the raw amino-acid sequence, 550 residues long: Mycosin-2 (550 aa).

An N-terminal signal peptide occupies residues 1-33 (MASPLNRPGLRAAAASAALTLVALSANVPAAQA). The disordered stretch occupies residues 34 to 62 (IPPPSVDPAMVPADARPGPDQPMRRSNSC). In terms of domain architecture, Peptidase S8 spans 79-490 (GFNLVNISKA…YGLVDPVAAL (412 aa)). Catalysis depends on charge relay system residues aspartate 103 and histidine 133. A compositionally biased stretch (pro residues) spans 168–190 (PPVTAAPAPPVEVPPPMPPPPPV). The disordered stretch occupies residues 168-236 (PPVTAAPAPP…PPPPPGAPDG (69 aa)). Catalysis depends on serine 435, which acts as the Charge relay system. A helical transmembrane segment spans residues 524 to 544 (NIAIGFVGAVATGVLAMAIGA).

It belongs to the peptidase S8 family.

It localises to the cell membrane. The chain is Mycosin-2 from Mycobacterium tuberculosis (strain ATCC 25618 / H37Rv).